Consider the following 276-residue polypeptide: Probable endonuclease 4 (276 aa).

His-70, His-108, Glu-144, Asp-177, His-180, His-211, Asp-224, His-226, and Glu-256 together coordinate Zn(2+).

The protein belongs to the AP endonuclease 2 family. Zn(2+) serves as cofactor.

It catalyses the reaction Endonucleolytic cleavage to 5'-phosphooligonucleotide end-products.. In terms of biological role, endonuclease IV plays a role in DNA repair. It cleaves phosphodiester bonds at apurinic or apyrimidinic (AP) sites, generating a 3'-hydroxyl group and a 5'-terminal sugar phosphate. The polypeptide is Probable endonuclease 4 (Metamycoplasma arthritidis (strain 158L3-1) (Mycoplasma arthritidis)).